Reading from the N-terminus, the 315-residue chain is N-acetylneuraminate lyase (315 aa).

Aceneuramate contacts are provided by Ser59 and Ser60. Tyr149 functions as the Proton donor in the catalytic mechanism. Catalysis depends on Lys177, which acts as the Schiff-base intermediate with substrate. Residues Ser179, Gly202, Asp204, Glu205, and Gly221 each coordinate aceneuramate.

Belongs to the DapA family. NanA subfamily. As to quaternary structure, homotetramer.

The protein localises to the cytoplasm. The catalysed reaction is aceneuramate = aldehydo-N-acetyl-D-mannosamine + pyruvate. Its pathway is amino-sugar metabolism; N-acetylneuraminate degradation; D-fructose 6-phosphate from N-acetylneuraminate: step 1/5. Its function is as follows. Catalyzes the reversible aldol cleavage of N-acetylneuraminic acid (sialic acid; Neu5Ac) to form pyruvate and N-acetylmannosamine (ManNAc) via a Schiff base intermediate. Cannot use 2,7-anhydro-Neu5Ac. Involved in the degradation of sialic acid, which is present in the host mucus layer and represents a much-coveted source of nutrients for R.gnavus, a prevalent member of the normal gut microbiota. In Mediterraneibacter gnavus (strain ATCC 29149 / DSM 114966 / JCM 6515 / VPI C7-9) (Ruminococcus gnavus), this protein is N-acetylneuraminate lyase.